A 110-amino-acid polypeptide reads, in one-letter code: Late cornified envelope protein 1A (110 aa).

Low complexity predominate over residues 1–10 (MSCQQSQQQC). 2 disordered regions span residues 1 to 23 (MSCQ…CPPK) and 83 to 110 (QSSG…GGCC). The segment covering 11–23 (QPPPKCTPKCPPK) has biased composition (pro residues). Over residues 83–95 (QSSGCCSQPSGGS) the composition is skewed to low complexity. Gly residues predominate over residues 96-110 (SCCGGDSGQHSGGCC).

This sequence belongs to the LCE family. In terms of assembly, interacts with CYSRT1. In terms of tissue distribution, skin-specific. Expression was readily detected in adult trunk skin, adult arm skin, fetal skin, penal skin, vulva, esophagus and tongue. Not expressed in the cervix, rectum, lung, colon, or placenta.

Precursors of the cornified envelope of the stratum corneum. The chain is Late cornified envelope protein 1A (LCE1A) from Homo sapiens (Human).